The chain runs to 647 residues: TNFAIP3-interacting protein 1 (647 aa).

Positions 39–72 (MQGIKMLGELLEESQMEASRLRQKAEELVKDSEL) form a coiled coil. Over residues 61–71 (QKAEELVKDSE) the composition is skewed to basic and acidic residues. The interval 61 to 168 (QKAEELVKDS…DLGPPPPEDS (108 aa)) is disordered. Ser77 is subject to Phosphoserine. Positions 95 to 425 (TKVQVHPATS…SPLTRQREYQ (331 aa)) are interaction with Nef. Residues 102–115 (ATSTAATTTATATT) show a composition bias toward low complexity. The span at 143–155 (EEQNSPETGSHPT) shows a compositional bias: polar residues. A coiled-coil region spans residues 209–270 (SKVHKNEQRT…KKLLMNSSCK (62 aa)). Residues Ser297, Ser416, and Ser455 each carry the phosphoserine modification. Residues 311 to 551 (AAEKKVKLLE…KASGERYHME (241 aa)) are a coiled coil. The tract at residues 444–601 (ASPSSPPAAF…MEHPPPHPNS (158 aa)) is required for inhibitory activity of TNF-induced NF-kappa-B activation. A ubiquitin-binding domain (UBD) region spans residues 465 to 523 (KQELVTQNELLKQQVKIFEEDFQRERSDRERMNEEKEELKKQVEKLQAQVTLTNAQLKT). Residues 537–543 (QKRKAKA) carry the Nuclear localization signal motif. Tyr565 is subject to Phosphotyrosine. The residue at position 584 (Arg584) is an Asymmetric dimethylarginine. Arg612 bears the Asymmetric dimethylarginine; alternate mark. Omega-N-methylarginine; alternate is present on Arg612. Positions 613–647 (PPCAGIRNQSSQVMDPPPDRPAEPESADNDCDGPQ) are disordered. Residues 637–647 (ESADNDCDGPQ) show a composition bias toward acidic residues. Phosphoserine is present on Ser638.

As to quaternary structure, interacts with TNFAIP3 and IKBKG (polyubiquitinated); facilitates TNFAIP3-mediated de-ubiquitination of NEMO/IKBKG. Interacts with polyubiquitin. Interacts with MAPK1, SELPLG and PIK3CD. Interacts with IRAK1 (polyubiquitinated). Interacts with MYD88; the interaction is indicative for participation in an activated TLR-signaling complex. Interacts with TAX1BP1. Post-translationally, phosphorylation at Tyr-565 by SRC-family kinases recruits phosphoinositide-3-kinase (PI3K) PIK3CD:p85 heterodimer which results in integrin activation and leukocyte adhesion to activated endothelium during inflammation. As to expression, ubiquitous. Abundant in heart and skeletal muscle and expressed at lower levels in thymus, liver, kidney, brain and intestinal tract.

It is found in the cytoplasm. Its subcellular location is the nucleus. Inhibits NF-kappa-B activation and TNF-induced NF-kappa-B-dependent gene expression by regulating TAX1BP1 and A20/TNFAIP3-mediated deubiquitination of IKBKG; proposed to link A20/TNFAIP3 to ubiquitinated IKBKG. Involved in regulation of EGF-induced ERK1/ERK2 signaling pathway; blocks MAPK3/MAPK1 nuclear translocation and MAPK1-dependent transcription. Increases cell surface CD4(T4) antigen expression. Involved in the anti-inflammatory response of macrophages and positively regulates TLR-induced activation of CEBPB. Involved in the prevention of autoimmunity; this function implicates binding to polyubiquitin. Involved in leukocyte integrin activation during inflammation; this function is mediated by association with SELPLG and dependent on phosphorylation by SRC-family kinases. The polypeptide is TNFAIP3-interacting protein 1 (Tnip1) (Mus musculus (Mouse)).